Reading from the N-terminus, the 574-residue chain is DNA mismatch repair protein MutL (574 aa).

The protein belongs to the DNA mismatch repair MutL/HexB family.

Functionally, this protein is involved in the repair of mismatches in DNA. It is required for dam-dependent methyl-directed DNA mismatch repair. May act as a 'molecular matchmaker', a protein that promotes the formation of a stable complex between two or more DNA-binding proteins in an ATP-dependent manner without itself being part of a final effector complex. The sequence is that of DNA mismatch repair protein MutL from Coxiella burnetii (strain Dugway 5J108-111).